The following is a 501-amino-acid chain: Raftlin-2 (501 aa).

2 disordered regions span residues 1–20 (MGCGLRKLEDPDDSSPGKIF) and 196–239 (SWNE…RKGE). G2 carries the N-myristoyl glycine lipid modification. C3 carries S-palmitoyl cysteine lipidation. Positions 220–233 (GQYQMEQNGSPTSS) are enriched in polar residues. Residue S405 is modified to Phosphoserine. The tract at residues 407–449 (AQTPDKKASRHIKGEDKNKATSRSIGLDTTSSQPAESRHLPEE) is disordered. T409 is subject to Phosphothreonine. The span at 410 to 425 (PDKKASRHIKGEDKNK) shows a compositional bias: basic and acidic residues. A compositionally biased stretch (polar residues) spans 427–441 (TSRSIGLDTTSSQPA). S430 is subject to Phosphoserine.

The protein belongs to the raftlin family.

It is found in the cell membrane. In terms of biological role, upon bacterial lipopolysaccharide stimulation, mediates clathrin-dependent internalization of TLR4 in dendritic cells, resulting in activation of TICAM1-mediated signaling and subsequent IFNB1 production. May regulate B-cell antigen receptor-mediated signaling. In Homo sapiens (Human), this protein is Raftlin-2 (RFTN2).